Reading from the N-terminus, the 264-residue chain is uncharacterized protein (264 aa).

This is an uncharacterized protein from Shigella flexneri.